We begin with the raw amino-acid sequence, 290 residues long: UPF0761 membrane protein ASA_4118 (290 aa).

6 consecutive transmembrane segments (helical) span residues 48–68 (LLSL…FPVF), 104–124 (NTTA…ISAI), 144–164 (FAMY…SIAI), 182–202 (IGYL…FLLV), 216–236 (AFIG…GFAI), and 250–270 (ALAT…VVLL).

It belongs to the UPF0761 family.

Its subcellular location is the cell inner membrane. This chain is UPF0761 membrane protein ASA_4118, found in Aeromonas salmonicida (strain A449).